Here is a 334-residue protein sequence, read N- to C-terminus: MYNTDIVIIGSGPVGLFAVFQAGMLGMKCHVIDAQEVIGGQCITLYPEKHIYDIPAYPKIAAKELIKQLESQAAPFNPVYHLNQQATELNKHDDFFEIKTSKNTLIKSKVIIIAAGAGAFGPNKPPIANIEAFEGKSIFYFINDKSKFLGKNIVVAGGGDSAVDWAITLSEIANKIYLVHRRDKFTAATESVRQLRHIAETGKIELVTGYQLNNLDGHNSELRSVIVKDLQNNIRKLDANILLPFFGLKQDLGPLANWGFNVRLQHIEVDNYYYQTNIKGIYAIGDVAHYVGKLKLIITGFAEAACSLHHAYSRVFDGKALHFEYSTNKYEQKQ.

D33, Q41, Y46, A86, F120, D286, and T327 together coordinate FAD.

This sequence belongs to the ferredoxin--NADP reductase type 2 family. Homodimer. Requires FAD as cofactor.

It carries out the reaction 2 reduced [2Fe-2S]-[ferredoxin] + NADP(+) + H(+) = 2 oxidized [2Fe-2S]-[ferredoxin] + NADPH. This Rickettsia prowazekii (strain Madrid E) protein is Ferredoxin--NADP reductase.